Consider the following 179-residue polypeptide: MTKQPDEWLDDVPDNDEEDEEIIWVSKSEIKRDAEELKRLGAELMELGSNSLDRIPLDEDLRSAIELAQKIKKEGRRRQMQLIGKMLRSRDEEPIRTALDKLKNRHNQQVALFHKLEMMRDRLVEQGDEAVAEVLALYPNADRQQLRAMIRNAQKEKAGNKPPKAYRQIFQYLRELAEA.

This sequence belongs to the DarP family.

It localises to the cytoplasm. Member of a network of 50S ribosomal subunit biogenesis factors which assembles along the 30S-50S interface, preventing incorrect 23S rRNA structures from forming. Promotes peptidyl transferase center (PTC) maturation. The chain is Dual-action ribosomal maturation protein DarP from Erwinia tasmaniensis (strain DSM 17950 / CFBP 7177 / CIP 109463 / NCPPB 4357 / Et1/99).